A 272-amino-acid polypeptide reads, in one-letter code: 2-succinyl-6-hydroxy-2,4-cyclohexadiene-1-carboxylate synthase (272 aa).

The protein belongs to the AB hydrolase superfamily. MenH family. Monomer.

It carries out the reaction 5-enolpyruvoyl-6-hydroxy-2-succinyl-cyclohex-3-ene-1-carboxylate = (1R,6R)-6-hydroxy-2-succinyl-cyclohexa-2,4-diene-1-carboxylate + pyruvate. Its pathway is quinol/quinone metabolism; 1,4-dihydroxy-2-naphthoate biosynthesis; 1,4-dihydroxy-2-naphthoate from chorismate: step 3/7. It participates in quinol/quinone metabolism; menaquinone biosynthesis. Functionally, catalyzes a proton abstraction reaction that results in 2,5-elimination of pyruvate from 2-succinyl-5-enolpyruvyl-6-hydroxy-3-cyclohexene-1-carboxylate (SEPHCHC) and the formation of 2-succinyl-6-hydroxy-2,4-cyclohexadiene-1-carboxylate (SHCHC). In Yersinia pseudotuberculosis serotype O:1b (strain IP 31758), this protein is 2-succinyl-6-hydroxy-2,4-cyclohexadiene-1-carboxylate synthase.